We begin with the raw amino-acid sequence, 79 residues long: EAMZP30-47 protein (79 aa).

The span at 1–12 (HAASPRGRPQQR) shows a compositional bias: low complexity. The disordered stretch occupies residues 1–47 (HAASPRGRPQQRSSRHGAEGPDTTRRGSCCSSSSSCCRPSTPRHPHN). Over residues 16–25 (HGAEGPDTTR) the composition is skewed to basic and acidic residues. The span at 28-37 (SCCSSSSSCC) shows a compositional bias: low complexity.

It localises to the membrane. It is found in the cell membrane. The protein resides in the cytoplasmic vesicle. The protein localises to the secretory vesicle. Its subcellular location is the rhoptry. This is EAMZP30-47 protein (CMC17) from Eimeria acervulina (Coccidian parasite).